A 217-amino-acid polypeptide reads, in one-letter code: Ribonuclease HII (217 aa).

Residues 17–207 (KVIYGVDEAG…CVGQSVSGAR (191 aa)) form the RNase H type-2 domain. Residues D23, E24, and D116 each coordinate a divalent metal cation.

It belongs to the RNase HII family. Mn(2+) serves as cofactor. Mg(2+) is required as a cofactor.

It localises to the cytoplasm. The enzyme catalyses Endonucleolytic cleavage to 5'-phosphomonoester.. In terms of biological role, endonuclease that specifically degrades the RNA of RNA-DNA hybrids. The sequence is that of Ribonuclease HII from Nitrosomonas europaea (strain ATCC 19718 / CIP 103999 / KCTC 2705 / NBRC 14298).